The sequence spans 737 residues: Photosystem I P700 chlorophyll a apoprotein A2 (737 aa).

Helical transmembrane passes span isoleucine 46–alanine 69, leucine 135–glutamine 158, leucine 175–isoleucine 199, isoleucine 273–tyrosine 291, leucine 330–tyrosine 353, alanine 369–valine 395, alanine 417–histidine 439, and phenylalanine 520–valine 538. [4Fe-4S] cluster is bound by residues cysteine 562 and cysteine 571. A run of 2 helical transmembrane segments spans residues alanine 578–tryptophan 599 and leucine 646–isoleucine 668. 3 residues coordinate chlorophyll a: histidine 657, methionine 665, and tyrosine 673. Tryptophan 674 contributes to the phylloquinone binding site. Residues leucine 710–alanine 730 form a helical membrane-spanning segment.

The protein belongs to the PsaA/PsaB family. The PsaA/B heterodimer binds the P700 chlorophyll special pair and subsequent electron acceptors. PSI consists of a core antenna complex that captures photons, and an electron transfer chain that converts photonic excitation into a charge separation. The eukaryotic PSI reaction center is composed of at least 11 subunits. The cofactor is P700 is a chlorophyll a/chlorophyll a' dimer, A0 is one or more chlorophyll a, A1 is one or both phylloquinones and FX is a shared 4Fe-4S iron-sulfur center..

The protein resides in the plastid. It localises to the cyanelle thylakoid membrane. It catalyses the reaction reduced [plastocyanin] + hnu + oxidized [2Fe-2S]-[ferredoxin] = oxidized [plastocyanin] + reduced [2Fe-2S]-[ferredoxin]. Its function is as follows. PsaA and PsaB bind P700, the primary electron donor of photosystem I (PSI), as well as the electron acceptors A0, A1 and FX. PSI is a cytochrome c6-ferredoxin oxidoreductase, converting photonic excitation into a charge separation, which transfers an electron from the donor P700 chlorophyll pair to the spectroscopically characterized acceptors A0, A1, FX, FA and FB in turn. Oxidized P700 is reduced on the lumenal side of the thylakoid membrane by cytochrome c6. This Cyanophora paradoxa protein is Photosystem I P700 chlorophyll a apoprotein A2.